A 371-amino-acid chain; its full sequence is Carnitine monooxygenase oxygenase subunit (371 aa).

The 109-residue stretch at 44-152 (WICVAHSSEL…VEEYAGFLFI (109 aa)) folds into the Rieske domain. Residues Cys-86, His-88, Cys-106, and His-109 each coordinate [2Fe-2S] cluster. 3 residues coordinate Fe cation: His-208, His-213, and Asp-323.

Belongs to the bacterial ring-hydroxylating dioxygenase alpha subunit family. CntA subfamily. Composed of an oxygenase subunit (cntA) and a reductase subunit (cntB). [2Fe-2S] cluster serves as cofactor. The cofactor is Fe cation.

The catalysed reaction is (R)-carnitine + NADH + O2 + H(+) = (3R)-3-hydroxy-4-oxobutanoate + trimethylamine + NAD(+) + H2O. It carries out the reaction (R)-carnitine + NADPH + O2 + H(+) = (3R)-3-hydroxy-4-oxobutanoate + trimethylamine + NADP(+) + H2O. Its pathway is amine and polyamine metabolism; carnitine metabolism. Converts carnitine to trimethylamine and malic semialdehyde. The sequence is that of Carnitine monooxygenase oxygenase subunit from Acinetobacter baumannii (strain ATCC 19606 / DSM 30007 / JCM 6841 / CCUG 19606 / CIP 70.34 / NBRC 109757 / NCIMB 12457 / NCTC 12156 / 81).